The chain runs to 240 residues: Izumo sperm-egg fusion protein 3 (240 aa).

Positions 1 to 22 (MGDLWLLLLLPLSLAAFHGVKG) are cleaved as a signal peptide. At 23-176 (CLECDPKFIE…DDPKKAESRE (154 aa)) the chain is on the extracellular side. The chain crosses the membrane as a helical span at residues 177–197 (IGLFLILLAEGVILGGVLLLF). Residues 198–240 (HFCISHQRKMKAIRRSLKTYLEKKLEELMGIKDEKEKDFRGRE) are Cytoplasmic-facing.

Belongs to the Izumo family. In terms of assembly, monomer and homodimer.

It localises to the cell membrane. This is Izumo sperm-egg fusion protein 3 (IZUMO3) from Bos taurus (Bovine).